A 500-amino-acid polypeptide reads, in one-letter code: Tyrosine decarboxylase 2 (500 aa).

Tandem repeats lie at residues 65-122 and 125-176. A 2 X approximate tandem repeats region spans residues 65-176; sequence EDIRQKIVPG…KFLNRFGKRS (112 aa). A substrate-binding site is contributed by S89. The pyridoxal 5'-phosphate site is built by A153 and S154. A substrate-binding site is contributed by H189. Residues T248 and N302 each contribute to the pyridoxal 5'-phosphate site. K305 carries the N6-(pyridoxal phosphate)lysine modification.

It belongs to the group II decarboxylase family. Requires pyridoxal 5'-phosphate as cofactor. Mostly expressed in bulbs, and, to a lower extent, in stems, roots, leaves and flowers.

The catalysed reaction is L-tyrosine + H(+) = tyramine + CO2. The protein operates within alkaloid biosynthesis. Its function is as follows. Catalyzes the decarboxylation of L-tyrosine to tyramine, which is converted to norbelladine, a precursor to all Amaryllidaceae alkaloids such as galanthamine, lycorine and haemanthamine, and including haemanthamine- and crinamine-type alkaloids, promising anticancer agents. This is Tyrosine decarboxylase 2 from Narcissus pseudonarcissus (Daffodil).